Reading from the N-terminus, the 337-residue chain is Heme A synthase (337 aa).

Helical transmembrane passes span I6–I26, G93–I113, I118–M138, L154–K174, and L192–V212. Residue H256 participates in heme binding. 3 helical membrane-spanning segments follow: residues L258–E278, I285–L305, and V308–I328. H316 contributes to the heme binding site.

Belongs to the COX15/CtaA family. Type 2 subfamily. As to quaternary structure, interacts with CtaB. It depends on heme b as a cofactor.

It localises to the cell membrane. The catalysed reaction is Fe(II)-heme o + 2 A + H2O = Fe(II)-heme a + 2 AH2. The protein operates within porphyrin-containing compound metabolism; heme A biosynthesis; heme A from heme O: step 1/1. In terms of biological role, catalyzes the conversion of heme O to heme A by two successive hydroxylations of the methyl group at C8. The first hydroxylation forms heme I, the second hydroxylation results in an unstable dihydroxymethyl group, which spontaneously dehydrates, resulting in the formyl group of heme A. The polypeptide is Heme A synthase (Rickettsia felis (strain ATCC VR-1525 / URRWXCal2) (Rickettsia azadi)).